Reading from the N-terminus, the 89-residue chain is Translation initiation factor IF-1, chloroplastic (89 aa).

Residues methionine 1–proline 73 enclose the S1-like domain.

Belongs to the IF-1 family. Component of the 30S ribosomal translation pre-initiation complex which assembles on the 30S ribosome in the order IF-2 and IF-3, IF-1 and N-formylmethionyl-tRNA(fMet); mRNA recruitment can occur at any time during PIC assembly.

It localises to the plastid. The protein resides in the chloroplast. One of the essential components for the initiation of protein synthesis. Stabilizes the binding of IF-2 and IF-3 on the 30S subunit to which N-formylmethionyl-tRNA(fMet) subsequently binds. Helps modulate mRNA selection, yielding the 30S pre-initiation complex (PIC). Upon addition of the 50S ribosomal subunit IF-1, IF-2 and IF-3 are released leaving the mature 70S translation initiation complex. The sequence is that of Translation initiation factor IF-1, chloroplastic from Jasminum nudiflorum (Winter jasmine).